We begin with the raw amino-acid sequence, 129 residues long: Chromatin accessibility complex protein 1 (129 aa).

The residue at position 2 (A2) is an N-acetylalanine. At K102 the chain carries N6-acetyllysine. Residues 104-120 (LKMLKEKREEEEDNEDD) adopt a coiled-coil conformation. A disordered region spans residues 109–129 (EKREEEEDNEDDGSDLGEALA). Residues 112–123 (EEEEDNEDDGSD) are compositionally biased toward acidic residues. Phosphoserine is present on S122.

As to quaternary structure, heterodimer with POLE3; binds to DNA. Component of the CHRAC ISWI chromatin remodeling complex at least composed of SMARCA5/SNF2H, BAZ1A/ACF1, CHRAC1 and POLE3; the complex preferentially binds DNA through the CHRAC1-POLE3 heterodimer and possesses ATP-dependent nucleosome-remodeling activity. Within the complex, the heterodimer with POLE3 interacts with SMARCA5/SNF2H; the interaction is direct and enhances nucleosome sliding activity by the SMARCA5/SNF2H and BAZ1A/ACF1 interaction. Within the complex, the heterodimer with POLE3 interacts with BAZ1A/ACF1; the interactions are direct. In terms of tissue distribution, ubiquitously expressed.

Its subcellular location is the nucleus. Forms a complex with DNA polymerase epsilon subunit POLE3 and binds naked DNA, which is then incorporated into chromatin, aided by the nucleosome remodeling activity of ISWI/SNF2H and ACF1. Does not enhance nucleosome sliding activity of the ACF-5 ISWI chromatin remodeling complex. The chain is Chromatin accessibility complex protein 1 (Chrac1) from Mus musculus (Mouse).